The sequence spans 187 residues: Elongation factor P (187 aa).

Belongs to the elongation factor P family.

It localises to the cytoplasm. Its pathway is protein biosynthesis; polypeptide chain elongation. Functionally, involved in peptide bond synthesis. Stimulates efficient translation and peptide-bond synthesis on native or reconstituted 70S ribosomes in vitro. Probably functions indirectly by altering the affinity of the ribosome for aminoacyl-tRNA, thus increasing their reactivity as acceptors for peptidyl transferase. The chain is Elongation factor P (efp) from Helicobacter pylori (strain J99 / ATCC 700824) (Campylobacter pylori J99).